Here is a 429-residue protein sequence, read N- to C-terminus: CinA-like protein (429 aa).

Belongs to the CinA family.

The chain is CinA-like protein from Prochlorococcus marinus (strain MIT 9313).